Reading from the N-terminus, the 514-residue chain is Na(+)/H(+) antiporter NhaB (514 aa).

The next 12 membrane-spanning stretches (helical) occupy residues 23-43, 63-83, 97-117, 120-140, 144-164, 202-222, 238-258, 303-323, 357-377, 391-411, 447-467, and 475-495; these read LALL…PFIA, PLLP…TSAA, LLLM…LFIF, LLLS…AAAF, FLDA…FYGI, LMMH…VGEP, FFLR…LTCM, AIIG…VGLI, LTVF…APII, LFYL…VGTI, ATPN…APLI, and VWMA…CVEF.

The protein belongs to the NhaB Na(+)/H(+) (TC 2.A.34) antiporter family.

The protein localises to the cell inner membrane. It catalyses the reaction 2 Na(+)(in) + 3 H(+)(out) = 2 Na(+)(out) + 3 H(+)(in). Functionally, na(+)/H(+) antiporter that extrudes sodium in exchange for external protons. This Salmonella paratyphi B (strain ATCC BAA-1250 / SPB7) protein is Na(+)/H(+) antiporter NhaB.